Reading from the N-terminus, the 671-residue chain is Nucleolar GTP-binding protein 1 (671 aa).

The 182-residue stretch at 169 to 350 (RTVLICGYPN…VKNAACERLL (182 aa)) folds into the OBG-type G domain. Residues 175 to 182 (GYPNVGKS), 221 to 225 (DTPGI), and 289 to 292 (NKTD) each bind GTP. The interval 516 to 671 (VAQNRSTVPR…KRGKGKTDRR (156 aa)) is disordered. Polar residues predominate over residues 595 to 605 (RAMSISRSQSR). Composition is skewed to basic residues over residues 631-640 (NKSHKKRDKN) and 654-671 (RPKH…TDRR).

This sequence belongs to the TRAFAC class OBG-HflX-like GTPase superfamily. OBG GTPase family. NOG subfamily.

It localises to the nucleus. The protein localises to the nucleolus. Its function is as follows. Involved in the biogenesis of the 60S ribosomal subunit. The protein is Nucleolar GTP-binding protein 1 of Arabidopsis thaliana (Mouse-ear cress).